We begin with the raw amino-acid sequence, 220 residues long: uncharacterized protein (220 aa).

The stretch at Asp165–Ile202 forms a coiled coil.

This is an uncharacterized protein from Pasteurella multocida (strain Pm70).